Consider the following 121-residue polypeptide: Small ribosomal subunit protein uS13 (121 aa).

Positions 99–121 (GQRTRTNARTRRGARKTVAGKKK) are disordered. Positions 100–121 (QRTRTNARTRRGARKTVAGKKK) are enriched in basic residues.

It belongs to the universal ribosomal protein uS13 family. Part of the 30S ribosomal subunit. Forms a loose heterodimer with protein S19. Forms two bridges to the 50S subunit in the 70S ribosome.

Located at the top of the head of the 30S subunit, it contacts several helices of the 16S rRNA. In the 70S ribosome it contacts the 23S rRNA (bridge B1a) and protein L5 of the 50S subunit (bridge B1b), connecting the 2 subunits; these bridges are implicated in subunit movement. Contacts the tRNAs in the A and P-sites. This Synechococcus sp. (strain RCC307) protein is Small ribosomal subunit protein uS13.